The following is a 138-amino-acid chain: uncharacterized protein (138 aa).

The interval 89–138 is disordered; that stretch reads DDYEDDFEDSDFQDGDFDDFEDEDGFDDDDDFEDDDFEYEDEDNDLDFDE.

This is an uncharacterized protein from Treponema pallidum (strain Nichols).